A 189-amino-acid polypeptide reads, in one-letter code: Probable thymidylate kinase 1 (189 aa).

Position 9 to 16 (9 to 16) interacts with ATP; sequence GIDGSGKT.

Belongs to the thymidylate kinase family.

The catalysed reaction is dTMP + ATP = dTDP + ADP. This is Probable thymidylate kinase 1 (tmk1) from Saccharolobus solfataricus (strain ATCC 35092 / DSM 1617 / JCM 11322 / P2) (Sulfolobus solfataricus).